We begin with the raw amino-acid sequence, 280 residues long: Chemotaxis protein methyltransferase 2 (280 aa).

The CheR-type methyltransferase domain occupies 10–280 (FGNQEFHYTR…SVGQTVYSPA (271 aa)). S-adenosyl-L-methionine-binding positions include asparagine 85, threonine 87, arginine 91, glutamate 125, aspartate 150, 208 to 209 (NL), and 226 to 227 (RN).

Interacts with the C-terminal pentapeptide GWEEF of the methyl-accepting chemotaxis protein McpB.

It carries out the reaction L-glutamyl-[protein] + S-adenosyl-L-methionine = [protein]-L-glutamate 5-O-methyl ester + S-adenosyl-L-homocysteine. Methylation of the methyl-accepting chemotaxis proteins (MCP) to form gamma-glutamyl methyl ester residues in MCP. It specifically targets the McpB chemoreceptor. This is Chemotaxis protein methyltransferase 2 from Pseudomonas aeruginosa (strain ATCC 15692 / DSM 22644 / CIP 104116 / JCM 14847 / LMG 12228 / 1C / PRS 101 / PAO1).